The sequence spans 222 residues: Deoxyribose-phosphate aldolase (222 aa).

The active-site Proton donor/acceptor is aspartate 90. Lysine 152 functions as the Schiff-base intermediate with acetaldehyde in the catalytic mechanism. The active-site Proton donor/acceptor is lysine 181.

It belongs to the DeoC/FbaB aldolase family. DeoC type 1 subfamily.

It is found in the cytoplasm. It catalyses the reaction 2-deoxy-D-ribose 5-phosphate = D-glyceraldehyde 3-phosphate + acetaldehyde. It functions in the pathway carbohydrate degradation; 2-deoxy-D-ribose 1-phosphate degradation; D-glyceraldehyde 3-phosphate and acetaldehyde from 2-deoxy-alpha-D-ribose 1-phosphate: step 2/2. Catalyzes a reversible aldol reaction between acetaldehyde and D-glyceraldehyde 3-phosphate to generate 2-deoxy-D-ribose 5-phosphate. The protein is Deoxyribose-phosphate aldolase of Pectobacterium atrosepticum (strain SCRI 1043 / ATCC BAA-672) (Erwinia carotovora subsp. atroseptica).